We begin with the raw amino-acid sequence, 449 residues long: Phosphoglucosamine mutase (449 aa).

Ser101 (phosphoserine intermediate) is an active-site residue. Mg(2+) contacts are provided by Ser101, Asp240, Asp242, and Asp244. Ser101 is modified (phosphoserine).

This sequence belongs to the phosphohexose mutase family. The cofactor is Mg(2+). In terms of processing, activated by phosphorylation.

The enzyme catalyses alpha-D-glucosamine 1-phosphate = D-glucosamine 6-phosphate. Catalyzes the conversion of glucosamine-6-phosphate to glucosamine-1-phosphate. This Streptococcus suis (strain 98HAH33) protein is Phosphoglucosamine mutase.